A 7214-amino-acid polypeptide reads, in one-letter code: MPSISAAADSSAEFWKRNTAGMEISRLSHLTRSYEGQAQWRSYPLNPSIELQRLGAFCEAHRTSLLVILQAAWATVLGRFLATDTATFASCLENGDEAKHGVCSASWSQGATTLHELLEQLQQWHETSFTHQDIPLAELEQLLHVVPDTGLRVKHISSPSTSLSLSGPRHNRAIEVVAQVSPISVRISLEYNASALSSVYAQSIAGSLERSLQAVVNRGSTPVTQIDLCSKEDRESIFDWNAYVPVTISDCVHTRIERKALEQPHALAVAGSGGDMTYQQLNMQADNLAAYLQELGVGADSYVALCFEKSTLPIVAMLAVFKAGGAYVALNPAHPVKRQAVILSKINAQVILTGPGYAGTFPGLVKHSVEVTQDLLDQLAAERRATRLVRAARPETPAVVVFTSGSTGEPKGIVVEHRALVSSMIGHGTIMRLDSSTRALQFATYTFDLSVGEIFNTLMHGGCVCVPSEEERLDDLEGFIRRLEVNWALLTPTVLNMMTPANVPSVRTISTGGEPMKQDIIQAWADHVQLNNMYGPAETTILCAGRAALSPATPASNIGHALGARQWITNPMNPNQLCPIGAVGEVLIEGPGLARGYLHDEEKTNAAFVGNPDWLPKASPARRFYRSADLGFLSPDGTFNIVGRKDTQVKINGQRIELEEVEFNIKSLLNAGWQAVVAEVIKPKGYNDQSILGAFIQFEDDENDETELLGYISEGRRQQLRQLKEDLGLHLPAYMTPSVFVPMAHMPTTAHGKLDRRRLKDLAAGFSTEDLVSFSLAGSTNTAKREPVTETEKAVASLWSQVLKIPYESFGLNDNFFRLGGDSISAMKLSAAARSTGMSLTVAKIFGHPTLEAMSQIAVELSHTEIGSIKPFSLIDVENAFEFIDQLTLKWGLDRSSIEDAYPATALQEGLMAITQGEPGTYIYQNVYELPADIDLAKFCAAWESVVNTTEILRTTLLPTDTASTYQVVIKPSSIDWKYPASVEEYLKSDAQQTMLYGEPLARYALVPGTPGGSLSTFIWTAHHALYDGWSLPLLWKRVEEAYKGSGLSHQPHVAPFNRFIAHLRDMDAEATYAFWESYLSSSNPPKFPQLPYQTYKPRVNNIHQHEFSLTATSQSSGITTSTLIRAAWSLLMSQYTDAGDDIIIGVTVAGRNVDVPGISEMAAPMITTVPVRVQIDRDETVTELLTRVQTQTVEMMPFEHAGLQNIAKINRECRLACGFQNLLVVQPEEDESTSGSLGIKKIQSPEVGIYTYALVIQCLLRGDKVGVQVDFDDQVLSSWQVERICCQLEHLMGVLRASPNVKIGDLSLVSQKDYTQIMNWNHKLPVVEERCVHEIIRGQVLATPDAPAICSWDGDFTYAEVDRLSSRFARHLVSMGVGPETLVPHCFSKSAWTVIAMLAIIKAGGACVALDPGHPVDRLQAIINDAEAALVVTMPEHSHLFNGLVNKVVALSPQFFGSDDDLQSSETLPPRAGHKNPVFVLFTSGSTGKPKGIVIEHGMFASSAAAHSKAFGITAQSRVFQFAAHTFDVSVGDIFTSLMKGACICIPSDLERMNNVASAINRMKANYAFLTPTVANLLRPEQVPTLRTLTLGGEAPTRENIRTWADSLNLILCYGPAECSVYCSANPPATQQSNPAVLGHAIGGLIWLVDPVNHDKLTPVGCVGELVVQGAIVARGYLNEPEKTQSAFIQDPAWMPQTFPREYRRIYKTGDLARFNPDGSLSFVARKDTQAKVRGQRVELAEIEVHLSESPEIQHAMVAVPAAGPYKSRLVCILSLQELAQRSDGISRDSSRVALIQGSSDRSHAAQTASVVENRLAEKLPPYMIPAVWIPLKKMPLNLSGKIDRKLIKGWLEDVDEATYQSVAAMAAAEGTSLQQPTSDIEKKVQAAFSATLNIPVESVGLNTSFLSVGGDSISAMQVMSRLRSQNLRITVQDILKLRTVAALAGRAQYIEQSTTESSAPEAEVIDEWFELAPIQQLFFRMQPKGQNHFNQSFVLKLAQDVLQTELQRALEIVVQHHSMLRARFEQVDGSWSQKITNDVSGSFFMFPREEGSRERMMARFREAETLFDIKRGPMLTAQIWVAPESQYLFLAAHHLVIDLVSWRIILQDLEDVLRTGRINSTPTISFQNWAKLQREYVSQHLSKPDTWDLEAPTGDLAYWNMQGEANNWGDIVTESFTIDSQRTALLLGDCNIPLRTEPTDIMVAALLHSFRHAFSDRNVPAVYLEGHGREPWTSAIDVSRTVGWFTTMYPVSYETPEDNWLDAVKRLKDSRRKIAHNGWRYFTARSLLAGGMQDMEVVFNYLGLYQQLQRVDALFQESSITGTDCVEISPQMQRYSLFEIAAGVSNGRMEFTFEYNKKMSHRDTISSWINHYRQVLETGIDELMRQSELIPTLSDFPLLNLSYKDLDNLATSILPEAGVKSIDEIESLSPCSPMQLGLLMSQLKSEGAYEFFTIMEATAREGVDSAQLVAAWQQVIDRHPMLRTVFIKSAVPDRPYDQLVLKELRAQVVELRSDDPVHALRTLPQTAKLHQLAICHCENGRMFCKLEINHALIDGTSMAIIERDLKRAYSKKLSSVPPLAYVDYVSFLQEAKRAESVNFWNDYLQDAQPCQFPILNDGRDQSQALESINVELPGLTKETLSAFSERWGFTVANVVQTAWALVLRAFIGTDSVCYGYLTSGRDAPLDGIEDSVGPFINMLVCRLKFDPHEPALVALKNTQDGFLKAMSHQYVSLAEMQHALGVAAQGLFNTAMSFQRYSPEESMDLNLRTVYDYDPTEFNITVNVATREEGLQIDLTYWTSKLSSGQAVHLANTYSTVIMELLSNPETVLADVNMLSPLDRASLRDWNKELPFAVDRCMHEVIHQNARKRPHALALESWEAAYTYRDLDRASSRLARHLIKQGVSPDDCIPLCFEKSLYTIIALVAVLKAGGGFVLLDPKHPDDRLKGLLEDSKAKFLIVSPQTQDRCKDLISSLVVVSPKILDELPHADEDDIPPSTAVTPGDIMYVQFTSGSTGKPKGAVVHHRAACSSIEHHGKVMNYGPHSRIFQFSSYTFDAIILEAFTTLYHGGCVCIPSEEDRMSSMVQSMREMKVNNMFMTPTLARLFGPADVPSLTTLMLGGEPIPQDSINTWKDHVDLIGGYGPAECCVYCCYNPLSSSGFKPDVIGYPVGAVLWIVEADNHDRLVPVGAIGEIVVHGHTVGRGYLNDPTRTAASYISAPSWVADYGYPGEQTLYKTGDLGRYNSDGTLTIVGRKDTQVKVNGQRIELGEVEHCIKTEYPQVLQVAVDALKPEHANGRQILSAFLEFEAVEGSEEFQNKNSFLRAMNDKLRETMFEIEAILAQRLPPYMVPHLWFPLVTMPKSASGKTDRKVLKQLCNGLSKTELQQYSLASGSRKALETPMEETIAGLWKDLFGVSDIGSNDNFFRVGGDSIEAMKLAAAARAQGLSLSVADIFNYPKLDDMARIVVAAYGASAVAHKYDAPFSLVGGEESARSIVQKHIPHVQIDLVEDVYPSTSLQEGLLALTSSHSSAYVLQAPFLLPPNIDLDRFRDAWAKVVEANAILRTVIISTETQGTCQVTLRQSIEWSQASTLEEYLAQDRERPMGYGTALSRYGLTLDGYFVWTAHHSIYDGWSFALMLDEVEKRYKDESVVSRPLFAEYIRFLQRQQGKTDATAFWKSQLQDASSSSVFPQLPSSLYEVDVDRTFKYSFPFSTKSTVTASTLLSAAWGLTIGRLTNSSEVIYGSTRSGRNIDLAQATELMGPTIATVPIRISIDTSMSIEDFLAAVQNQATAAIPYEHLGLQNISKISPACKAACDFQNLFVVQPAVISDSTILGMKRVEIPTKGLHTYALNVECILTEEGTATLNFEYDGKVMQDYQIQRLAGQFHHVVCQLCENEDGRLKVGDVDAFSLDDEKQLRQWNARLKSFPEITRCAHDLVSERARLHPDLLAVTQSDGTSLTYDELEELSTLFARHLSTLKIGPGRIVPICLKKAVWVVVSILGVLKTGAAFVCLDPSSPSSRMHSIIEEVESEIVIVDPETKPIFNNHLQTLEIGAKSLDWIRSANASDMIFEVHRNPRDLMYVIFTSGSTGKPKGVMIEHASACSSFTYQGQEFGYDHESRVLQFSALTFDASLMEIFTTLCAGGCVCFPTEEEKQGDIVRAINNLRVNSVMLTPTVLRMIQPEDIPMVKHVVTGGEAVSHDIVQTWSSKVILKGVYGPTETSMICITADLVPGSSPANIGVPLGCRSWITLPDDHNHLAPIGSVGELLIQGPIVGRGYYKNQKQTQDVFIENPLWLQKRFGETGGGRLYKTGDLVYYAQNGDLMIVGRKDSQVKLHGQRIELGEIDHKMWSHPAVRQSSVVLPSQGPLKNRLVAVLTLDGTEERITTPHVLCPLSEEWKQYANSRIASIRQALRESLPSYMVPTVFVAVEKMPRQTSGKTDIKRVKKWVNELDEQTAEQALDIETTAPGLTVPGSEAEKVIQGAVSKVLNIPAEKIALNRSFISLGGDSITAIKLMNQLRDAGVNFSIKELLRAGSIGELAGRVTSISEGENVNPLLSLVSQKKEKKYSLLRLGDAEIEALLAQRLATIGLTDLTRVEDVYPCSPLQEGLLVAQTKGVGSYDVYNIYEVTTSKNASVSVNPHVLAKAWKEVVRRHQILRTIFIQGLEESTAFNQVVLREVHNAPFVIEDVKSNDAKALLQNLATPEYPAFEPWHSVTICSDANGTVCCGIRMHHGLFDASSMDIILREVAQAYNQRLSTPAPLYRDYISYLQGLQQGGNDGLAYWQEYLKDLEPCYFPSINEEALGTRTPQSLQFNVPGLSRILLFSARKNVTVSTILQTAWALVLRHYTSTEEICFGYLSHGRDIPLDGIDNIVGPMINMMVLRVILSGDRTLTDILEGTRDDVLNSLPHQHTSLAEIHHALDLQGRSAFNTTLSFASAAADAENYDGIAFKNLSGSGSTEYDIAVNASVVGEDLQIHFSYWSSALSPQQATAVAQAFTNFMDILTDSSDLPLRDIDFTSAAMRAQLLRWNATPYAPVHTTVHELFHRTALRYPENQAICSTDGSFTYSELDNLTTRFASFLREKGVGPEVLVPVCFNKSCWTIVSMLSILKAGGACVPLDPSHPPARIQEVSSRCEAKLILAAPHLVDRLPDCNATVISVTDGLMQGLPNLPSNFQIDLAKPANAAFVPFTSGSTGLPKGIILDHMGLCTMFEANASVVGIDHNTRTFQYAAYTFDVSIAETYITLTQGGCVCVPTDAERMNDIAGAITRLQANWTFLTPSVASLLNPIDVPTLKTLTLGGEAISRDLHSTWADKVRLINSYGPAECSIWTSNQRLFPDSSCADIGAGITCHLWVTEPDNHDRLVPIGCVGELVVQGPNLARGYLKDEEKTAATYIDTPAWLRNDTRSIAKRVYKTGDLVRHCADGHLEFVGRKDTQIKFHGQRVEIGEVEYQLRARLPKNTQVAVEMIKPLSQDGRQTLAGFITTEGGSGHENKGSPSLKGSSGDPVSLLRDPDETFKNIVRKLEHQLAETLPSYMIPSVFISMLNIPRNTSMKIDRKALRTLGANLTREQIATYSFVQGDKRAPRTAMEKRLQECWASVLKISPESIGADDSFFRIGGDSIGAMQLVSAARKTGLSITVGDIFQHQKLSQMANIVARNAAATTEEISIKPFSLLPKQRPDEDLVELAAFKVGIDRTLLQDVYPCTPLQEGLISLTARDHGLYTLQAVYRLPEMINIQEFQLAWLAVTEELDILRTRIVDLGHLGSYQVVISPVISQMRWVYGNSLSTYLREDKEIPVGYGKPLARYAIIEEEEEGEQKKYFVWTAHHSIYDGWSLGLMMDLVEKKYLKTSTIPSPPFNKFIHWLTNLDKAATRQYWKSTFEACSAPQFPSVPQHYRTKAKAAMTYSIRLPQKIDSEITVPTILRTAWALNISQYTRSDDVVFGMTQTGRNAPIPGVTEIVAPLITTVPVRVVFNRSQTVGNVLQEVQNQMVAMIPHEHVGLQNISKFSAECQAASKFENLLLIQTQQDQMVSPIGLERIPVTDLDIPAFGIVAECEVADGQVLVSVGYDSTVVSEKQMTNILRQFDFLVNQIGSESARNTPLVEMHLLGDNEIKMLEALNQSPDDRVSRLAHELIHERAVLQPEAIAIDSQEVQLSYGELDDLSTRLAYFLIDLGTGPDKVIPLFFRRSPWAMVAMLGVIKSGSAFVFLDPGHPIDRLEFVVQQIDAKLVLTSPDLESTWREKLAVFCVSPSALQSLPRLHDGNLPVTAVTPQNILYCIFTSGSTGRPRGCVIEHSNFLSGAVHHARRSRISESTRIMQIAPYTFDVSILEMLTGLIGGGCICLPRDYHQGARVADIINDLNINWTFLTPSVARTIVPSEVPSLQTLILGGEALAKVDIQTWAGKLHLHNGYGPSECSVAVASNEVRDPTIDPANIGSKMGCNIWVVDAENHDILLPIGAVGELLVEGAIVGRGYLQEPEKTAAAFIQDPAWVHYLPNTKSSERRRFYKTGDLVRLNADGTIHFIGRKDTQIKLRGLRIEMGEIEHHASTYRAIRHAVVAVPRAGRMKESIVVVYTLNAYDDSNEQQSDLRPLSNTDLETSQMSPAQLRKHLATHLPPYMVPQTYIGVARLPLLASGKIDRPKLQRWLENMDDATSELIAAQVGKTATHEAGPIDPADKLALALSEPISRLLAGDDEAYLETLKGRNIVLSQSGLNSITVVSMRAMIRDKFNADVSIDRLMESTVTIQDVARMIEHGNTAAGTDKQESAPQLDLLAEVDRMMNSLITEASPDVQTLSQPTPRAERILLTGATGFLGTEILRQLLSNPASTRTVVAIVRARDQDHAMERIVSSAKAAQWWQEEYRSRITPWVGDLAAPRLGLSESQWSTVEGRDHPGSESGSTAGPAEPRIDAIIHNGALVHWGADYHRLRDVNVSSVVSLLAALTRSQAPPTLTFVSGGHVQLDDNETTDEEMAAVLAHSTGYGQSKFVADLVVKRFAARYSTSAVSIVKPGLILGTAQSGVSNTDDFFWRVVATAVEIGGFNAEEPENVILLAGAQQVASIVTDKLQLNLNPARSRSGIPSVETKVRLAITTQELWHMLSDEFGYPMRGMGPAEWLDAMRAAVHAQGESHRLWPVLHFLEAGGGYMGLPVGGCQLQGATGADQESEKEELLASLRKSISYMRQIGYLQSDAPHAVDKVVFGRRNV.

Positions 257–651 (ERKALEQPHA…VGRKDTQVKI (395 aa)) are adenylation 1. The 77-residue stretch at 786–862 (EPVTETEKAV…AMSQIAVELS (77 aa)) folds into the Carrier 1 domain. Ser-823 is subject to O-(pantetheine 4'-phosphoryl)serine. The tract at residues 899 to 1318 (EDAYPATALQ…LVSQKDYTQI (420 aa)) is condensation 1. The segment at 1340-1735 (QVLATPDAPA…ARKDTQAKVR (396 aa)) is adenylation 2. The 77-residue stretch at 1877–1953 (QPTSDIEKKV…ALAGRAQYIE (77 aa)) folds into the Carrier 2 domain. At Ser-1914 the chain carries O-(pantetheine 4'-phosphoryl)serine. Residues 1962–2384 (PEAEVIDEWF…RQVLETGIDE (423 aa)) form an epimerization region. The tract at residues 2431 to 2845 (SPCSPMQLGL…MLSPLDRASL (415 aa)) is condensation 2. An adenylation 3 region spans residues 2866–3262 (QNARKRPHAL…VGRKDTQVKV (397 aa)). Residues 3398-3472 (ALETPMEETI…DMARIVVAAY (75 aa)) enclose the Carrier 3 domain. Ser-3433 carries the O-(pantetheine 4'-phosphoryl)serine modification. The interval 3510–3904 (VEDVYPSTSL…QLCENEDGRL (395 aa)) is condensation 3. The segment at 3943–4339 (ERARLHPDLL…VGRKDSQVKL (397 aa)) is adenylation 4. Residues 4476–4552 (VPGSEAEKVI…ELAGRVTSIS (77 aa)) form the Carrier 4 domain. Ser-4513 carries the post-translational modification O-(pantetheine 4'-phosphoryl)serine. Positions 4601–5033 (VEDVYPCSPL…TSAAMRAQLL (433 aa)) are condensation 4. The segment at 5051–5446 (FHRTALRYPE…VGRKDTQIKF (396 aa)) is adenylation 5. The tract at residues 5489-5515 (FITTEGGSGHENKGSPSLKGSSGDPVS) is disordered. Residues 5591–5667 (APRTAMEKRL…QMANIVARNA (77 aa)) form the Carrier 5 domain. Position 5628 is an O-(pantetheine 4'-phosphoryl)serine (Ser-5628). The interval 5707 to 6123 (QDVYPCTPLQ…HLLGDNEIKM (417 aa)) is condensation 5. An adenylation 6 region spans residues 6145–6543 (ERAVLQPEAI…GRKDTQIKLR (399 aa)). In terms of domain architecture, Carrier 6 spans 6683-6766 (DPADKLALAL…DVARMIEHGN (84 aa)). Ser-6725 carries the post-translational modification O-(pantetheine 4'-phosphoryl)serine. The tract at residues 6814-7194 (ILLTGATGFL…KSISYMRQIG (381 aa)) is thioesterase (TE) domain. The interval 6895-6915 (STVEGRDHPGSESGSTAGPAE) is disordered.

Belongs to the NRP synthetase family.

It participates in secondary metabolite biosynthesis. In terms of biological role, nonribosomal peptide synthetase; part of the gene cluster that mediates the biosynthesis of aspercryptins, linear lipopeptides built from six amino acids including 2 highly unusual and nonproteogenic amino acids, 2-amino-octanoic acid (2aoa) and 2-amino-dodecanol (2adol). The core structure of aspercryptins is as follows: Ser/Ala-Thr-Ile/Val-2aoa-Asn-2adol. The first step of aspercryptin biosynthesis is the generation of the fatty acid precursors, octanoic and dodecanoic acids, by the FAS subunits atnF and atnM. The fatty acid precursors are likely transformed into the corresponding alpha-amino fatty acids in three steps. First, they are hydroxylated by the cytochrome P450 monooxygenase atnE, then oxidized to the corresponding alpha-keto acids by the NAD(P)-dependent oxidoreductase atnD, and finally converted to the alpha-amino fatty acids by the PLP-dependent aminotransferases atnH or atnJ. the alpha-amino fatty acids, 2-amino-octanoic and 2-amino-dodecanoic acids, are recognized, activated, and covalently tethered to the NRPS atnA by its fourth and sixth adenylation domains. The second module of atnA is the Thr module and contains an epimerase (E) domain responsible for the epimerization of Thr to D-allo-Thr. Additionally, despite atnA having only one epimerase domain, the first amino acid of aspercryptin A1 is D-Ser, suggesting that serine is either loaded directly as D-Ser on the first module or that the epimerase domain in the threonine module epimerizes both L-Ser and L-Thr. After condensation of the hexapeptide of aspercryptin, the C-terminal reductase (TE) domain might be involved in the reductive release and production of the aldehyde hexapeptide. Further reduction would generate aspercryptins. The variety of aspercryptins produced reflects the flexibility of the atnA NRPS, allowing incorporation of alanine instead of serine, valine for isoleucine, and a C10 fatty amino alcohol instead of the C12 version. AtnB seems to be involved in the selectivity for Ile versus Val by the third module. Moreover, type B, C and D aspercryptins have an additional N-terminal cichorine, acetyl and propionyl group respectively. This is Nonribosomal peptide synthetase atnA from Emericella nidulans (strain FGSC A4 / ATCC 38163 / CBS 112.46 / NRRL 194 / M139) (Aspergillus nidulans).